Reading from the N-terminus, the 309-residue chain is Thioesterase lcsJ (309 aa).

The helical transmembrane segment at 11–31 (IAQVHGFVFSWWGVILLLAII) threads the bilayer. The segment at 61 to 83 (ASPTAENAQRRVPKTPKTGATDT) is disordered. N-linked (GlcNAc...) asparagine glycosylation occurs at N112. The interval 239–275 (SGWIPPRPESTGNSKSLDSLQANGHGATENGKHDAKD) is disordered. A compositionally biased stretch (polar residues) spans 248 to 260 (STGNSKSLDSLQA).

It belongs to the lcsJ thioesterase family.

The protein resides in the membrane. The protein operates within secondary metabolite biosynthesis. Functionally, thioesterase; part of the gene cluster that mediates the biosynthesis of the lipopeptide antibiotics leucinostatins that show extensive biological activities, including antimalarial, antiviral, antibacterial, antifungal, and antitumor activities, as well as phytotoxic. Leucinostatin A contains nine amino acid residues, including the unusual amino acid 4-methyl-L-proline (MePro), 2-amino-6-hydroxy-4-methyl-8-oxodecanoic acid (AHyMeOA), 3-hydroxyleucine (HyLeu), alpha-aminoisobutyric acid (AIB), beta-Ala, a 4-methylhex-2-enoic acid at the N-terminus as well as a N1,N1-dimethylpropane-1,2-diamine (DPD) at the C-terminus. The biosynthesis of leucinostatins is probably initiated with the assembly of 4-methylhex-2-enoic acid by a reducing PKS. Two reducing polyketide synthases, lcsB and lcsC, have been identified in the cluster and it is not clear which is the one that assembles 4-methylhex-2-enoic acid since both contain KS, AT, DH, cMT, ER, KR and ACP domains. The polyketide residue might be transferred to the NRPS lcsA, mediated by two additional enzymes, the acyl-CoA ligase lcsD and the thioesterase lcsE. The linear polyketide carboxylic acid, which is released from PKS, is converted to a CoA thioester by lcsD, and then lcsE hydrolyzes the thiol bond and shuttles the polyketide intermediate to lcsA. The C domain of the first module catalyzed the condensation of 4-methylhex-2-enoic acid and MePro carried by domain A1, followed by successive condensations of nine amino acids to trigger the elongation of the linear peptide. A5 and A6 domains of lcsA are proposed to incorporate leucine, A2 AHyMeOA, and A3 incorporates HyLeu. A4, A7 and A8 incorporate AIB. The AHyMeOA in leucinostatin A activated by the A2 might be produced by the second PKS (lcsB or lcsC) present within the cluster. The MePro is probably produced via leucine cyclization and may originate from a separate pathway, independent of the cluster. Another nonproteinogenic amino acid, beta-Ala, could be produced by an aspartic acid decarboxylase also localized outside of the cluster. Two candidates are VFPBJ_01400 and VFPBJ_10476. The final peptide scaffold may be released by the NAD(P)H-dependent thioester reductase (TE) at the C-terminal region of lcsA. Transamination of the lcsA product by the transaminase lcsP may produce DPD at the C-terminus. Further hydroxylation steps performed alternatively by the cytochrome P450 monooxygenases lcsI, lcsK and lcsN then yield the non-methylated leucinostatins precursor. It is also possible that leucines can be hydroxylated prior to their incorporation into the peptide. Varying extents of methylation then lead to the formation of leucinostatins A and B. The sequence is that of Thioesterase lcsJ from Purpureocillium lilacinum (Paecilomyces lilacinus).